The primary structure comprises 601 residues: MTASPKDEMWTVFKRLLGYLKPMKGMFLLSVCGLIVYGLVDAAFISFIGPFIDKGFSSSTPAISNGIALPTSQGFHADNQVLLMAPIVVILMFSLRGFANFVSTYGISYMSARLIMDMRQQVFEHYLSLPVSYMDKENTGNLISKVTFDTEQIARASGSALISIVRDGVTVIGMLGLMFYNSWKLSLCILVIGPIMGLVITIVSRRFRKVSKQIQTAMGDVSAATEQMIKGHKNVLAFGGQETETARFAKINDRNRHQNMKLAVAQAVSQPLIMVIGSFALAFVLYAASLDSMKADLTAGTFATILGAMMAMLQPIKNLTRVNAEFQRGIAACTTVFELLDTLPESDTGTYTVKRAKGNLRFDNVSFSYEGQERRALDKIDFEVTQGQTLALVGRSGSGKSTIASLVTRFYTGLESGDIKLDDVSIYDYSLKSLRSQVALVSQQVTLFNDTIANNIAYAYPGEATREQIIQAATLAHAMEFIEQLPEGLDTQVGENGVLLSGGQRQRIAIARAMLRDAPVLILDEATSALDTESEKAIQQGLDNLRQNRTSVVIAHRLSTIESADQILVVDQGRIVERGTHKSLLELGGMYAKLYQMQFGS.

Residues 28–328 form the ABC transmembrane type-1 domain; it reads LLSVCGLIVY…LTRVNAEFQR (301 aa). The next 6 helical transmembrane spans lie at 32-52, 81-101, 160-180, 183-203, 267-287, and 296-316; these read CGLIVYGLVDAAFISFIGPFI, VLLMAPIVVILMFSLRGFANF, ALISIVRDGVTVIGMLGLMFY, WKLSLCILVIGPIMGLVITIV, AVSQPLIMVIGSFALAFVLYA, and DLTAGTFATILGAMMAMLQPI. Residues 360 to 597 enclose the ABC transporter domain; the sequence is LRFDNVSFSY…GGMYAKLYQM (238 aa). 394-401 is a binding site for ATP; that stretch reads GRSGSGKS.

Belongs to the ABC transporter superfamily. Lipid exporter (TC 3.A.1.106) family. As to quaternary structure, homodimer.

It localises to the cell inner membrane. It catalyses the reaction ATP + H2O + lipid A-core oligosaccharideSide 1 = ADP + phosphate + lipid A-core oligosaccharideSide 2.. Functionally, involved in lipopolysaccharide (LPS) biosynthesis. Translocates lipid A-core from the inner to the outer leaflet of the inner membrane. Transmembrane domains (TMD) form a pore in the inner membrane and the ATP-binding domain (NBD) is responsible for energy generation. The chain is ATP-dependent lipid A-core flippase from Shewanella sp. (strain MR-4).